We begin with the raw amino-acid sequence, 441 residues long: MGNVATRKRPGCHHHIGRNEENLDDDEDGPAKKRLRIGEPQAENEYQKLAFKSRLQKLKKCRPHLKRRTYKVEEADPRPPVPRFIVDDYGDYEKPEPTRKEFAIPWFEHLFLPEFPTRSVINEKSFVLERQLGRGSFGVVYCASAIHDSERKFAIKMQEKREIISKRAVLQVKREASIQRLLPSHPFIARTYSTWQTRTHLYSLLQYPTGSTGDLFSVWRQRGSLSEAAIRLIGAELASAIDFLHQNDVIYRDVKLENVVLDQWGHALLIDFGLAKKLKQGSSTGTICGTLQYMSPDVASGGTYSHYVDWWSLGVLLHILLTGIYPYPNSEATHHANLKFIDYSTPIGCSREFANLMDRMLAVSITHRLCSFTVLHAHPFFRSIDFSKLEQKDYTPAAEIGNAEYDTYHKSEDALDDALFKENYDVSCGRNVIFAVLPVFW.

Basic residues predominate over residues 1 to 16; the sequence is MGNVATRKRPGCHHHI. Positions 1 to 41 are disordered; that stretch reads MGNVATRKRPGCHHHIGRNEENLDDDEDGPAKKRLRIGEPQ. One can recognise a Protein kinase domain in the interval 126 to 381; that stretch reads FVLERQLGRG…FTVLHAHPFF (256 aa). ATP-binding positions include 132 to 140 and K156; that span reads LGRGSFGVV. D253 serves as the catalytic Proton acceptor.

This sequence belongs to the protein kinase superfamily. Ser/Thr protein kinase family.

The enzyme catalyses L-seryl-[protein] + ATP = O-phospho-L-seryl-[protein] + ADP + H(+). The catalysed reaction is L-threonyl-[protein] + ATP = O-phospho-L-threonyl-[protein] + ADP + H(+). The protein is Putative serine/threonine-protein kinase F31E3.2 of Caenorhabditis elegans.